A 501-amino-acid chain; its full sequence is MSGVQTAEAEAQAQNQANGNRTRSRSHLDNTMAIRLLPLPVRAQLCAHLDALDVWQQLATAVKLYPDQVEQISSQKQRGRSASNEFLNIWGGQYNHTVQTLFALFKKLKLHNAMRLIKDYVSEDLHKYIPRSVPTISELRAAPDSSAKVNNGPPFPSSSGVSNSNNNRTSTTATEEIPSLESLGNIHISTVQRAAESLLEIDYAELENATDGWSPDNRLGQGGFGDVYRGKWKQLDVAIKVMNYRSPNIDQKMVELQQSYNELKYLNSIRHDNILALYGYSIKGGKPCLVYQLMKGGSLEARLRAHKAQNPLPALTWQQRFSISLGTARGIYFLHTARGTPLIHGDIKPANILLDQCLQPKIGDFGLVREGPKSLDAVVEVNKVFGTKIYLPPEFRNFRQLSTGVDVYSFGIVLLEVFTGRQVTDRVPENETKKNLLDYVKQQWRQNRMELLEKHLAAPMGKELDMCMCAIEAGLHCTALDPQDRPSMNAVLKRFEPFVTD.

The interval 1-25 is disordered; it reads MSGVQTAEAEAQAQNQANGNRTRSR. Residues 7-18 show a composition bias toward low complexity; sequence AEAEAQAQNQAN. The region spanning 55 to 121 is the Death domain; that stretch reads WQQLATAVKL…NAMRLIKDYV (67 aa). Residues 144-176 form a disordered region; that stretch reads DSSAKVNNGPPFPSSSGVSNSNNNRTSTTATEE. Positions 149 to 167 are enriched in low complexity; sequence VNNGPPFPSSSGVSNSNNN. Residues 213–499 form the Protein kinase domain; it reads WSPDNRLGQG…AVLKRFEPFV (287 aa). ATP-binding positions include 219–227 and lysine 240; that span reads LGQGGFGDV. Aspartate 346 (proton acceptor) is an active-site residue. ATP contacts are provided by residues 348 to 351 and aspartate 364; that span reads KPAN.

This sequence belongs to the protein kinase superfamily. TKL Ser/Thr protein kinase family. Pelle subfamily. As to quaternary structure, interacts (via Death domain) with tub (via Death domain). Interacts with Pellino (Pli).

The protein localises to the cell membrane. Its subcellular location is the cytoplasm. The enzyme catalyses L-seryl-[protein] + ATP = O-phospho-L-seryl-[protein] + ADP + H(+). The catalysed reaction is L-threonyl-[protein] + ATP = O-phospho-L-threonyl-[protein] + ADP + H(+). Its function is as follows. Plays an essential role in the Tl receptor signaling pathway that establishes embryonic dorsoventral polarity; the signal directs import of dl into ventral and ventrolateral nuclei, thereby establishing dorsoventral polarity. Tub recruits pll to the plasma membrane and protein-protein interaction activates pll. The sequence is that of Serine/threonine-protein kinase pelle (pll) from Drosophila melanogaster (Fruit fly).